A 457-amino-acid polypeptide reads, in one-letter code: Proline-specific permease ProY (457 aa).

Topologically, residues 1-17 are cytoplasmic; sequence MESKNKLKRGLSTRHIR. Helical transmembrane passes span 18–38 and 39–59; these read FMALGSAIGTGLFYGSADAIK and MAGPSVLLAYIIGGIAAYIIM. Topologically, residues 60 to 84 are cytoplasmic; sequence RALGEMSVHNPAASSFSRYAQENLG. The chain crosses the membrane as a helical span at residues 85–105; that stretch reads PLAGYITGWTYCFEILIVAIA. At 106–113 the chain is on the periplasmic side; the sequence is DVTAFGIY. Residues 114–134 traverse the membrane as a helical segment; it reads MGVWFPTVPHWIWVLSVVLII. Residues 135 to 156 are Cytoplasmic-facing; that stretch reads CAVNLMSVKVFGELEFWFSFFK. A helical membrane pass occupies residues 157-177; sequence VATIIIMIVAGFGIIIWGIGN. The Periplasmic segment spans residues 178-197; that stretch reads GGQPTGIHNLWSNGGFFSNG. The helical transmembrane segment at 198–218 threads the bilayer; the sequence is WLGMVMSLQMVMFAYGGIEII. Topologically, residues 219 to 242 are cytoplasmic; that stretch reads GITAGEAKDPEKSIPRAINSVPMR. The helical transmembrane segment at 243–263 threads the bilayer; it reads ILVFYVGTLFVIMSIYPWNQV. The Periplasmic portion of the chain corresponds to 264–277; the sequence is GTAGSPFVLTFQHM. Residues 278-298 form a helical membrane-spanning segment; sequence GITFAASILNFVVLTASLSAI. Topologically, residues 299 to 331 are cytoplasmic; it reads NSDVFGVGRMLHGMAEQGSAPKIFSKTSRRGIP. A helical transmembrane segment spans residues 332-352; the sequence is WVTVLVMTTALLFAVYLNYIM. Over 353 to 355 the chain is Periplasmic; the sequence is PEN. Residues 356–376 traverse the membrane as a helical segment; sequence VFLVIASLATFATVWVWIMIL. The Cytoplasmic portion of the chain corresponds to 377-399; sequence LSQIAFRRRLPPEEVKALKFKVP. The chain crosses the membrane as a helical span at residues 400–420; it reads GGVATTIGGLIFLLFIIGLIG. The Periplasmic portion of the chain corresponds to 421–424; it reads YHPD. Residues 425–445 form a helical membrane-spanning segment; sequence TRISLYVGFAWIVVLLIGWMF. Over 446–457 the chain is Cytoplasmic; that stretch reads KRRHDRQLAENQ.

This sequence belongs to the amino acid-polyamine-organocation (APC) superfamily. Amino acid transporter (AAT) (TC 2.A.3.1) family.

The protein resides in the cell inner membrane. Its function is as follows. Permease that is involved in the transport across the cytoplasmic membrane of proline. The polypeptide is Proline-specific permease ProY (proY) (Escherichia coli O157:H7).